We begin with the raw amino-acid sequence, 317 residues long: Beta-ketoacyl-[acyl-carrier-protein] synthase III (317 aa).

Residues Cys-112 and His-244 contribute to the active site. The tract at residues 245–249 (QANIR) is ACP-binding. Asn-274 is a catalytic residue.

Belongs to the thiolase-like superfamily. FabH family. Homodimer.

It is found in the cytoplasm. The catalysed reaction is malonyl-[ACP] + acetyl-CoA + H(+) = 3-oxobutanoyl-[ACP] + CO2 + CoA. It participates in lipid metabolism; fatty acid biosynthesis. In terms of biological role, catalyzes the condensation reaction of fatty acid synthesis by the addition to an acyl acceptor of two carbons from malonyl-ACP. Catalyzes the first condensation reaction which initiates fatty acid synthesis and may therefore play a role in governing the total rate of fatty acid production. Possesses both acetoacetyl-ACP synthase and acetyl transacylase activities. Its substrate specificity determines the biosynthesis of branched-chain and/or straight-chain of fatty acids. This is Beta-ketoacyl-[acyl-carrier-protein] synthase III from Rickettsia prowazekii (strain Madrid E).